The primary structure comprises 332 residues: NADH-quinone oxidoreductase subunit H (332 aa).

The next 9 membrane-spanning stretches (helical) occupy residues 4–24, 44–64, 78–98, 120–140, 165–185, 194–214, 255–275, 279–299, and 312–332; these read FAFF…IFAS, IGPD…MIKL, FIFA…LAAI, VALL…FLGG, VGAL…LVDI, FSWL…ALFI, IAGA…FWII, IMMI…RAAF, and YLIL…AVLL.

This sequence belongs to the complex I subunit 1 family. In terms of assembly, NDH-1 is composed of 14 different subunits. Subunits NuoA, H, J, K, L, M, N constitute the membrane sector of the complex.

Its subcellular location is the cell inner membrane. The catalysed reaction is a quinone + NADH + 5 H(+)(in) = a quinol + NAD(+) + 4 H(+)(out). Its function is as follows. NDH-1 shuttles electrons from NADH, via FMN and iron-sulfur (Fe-S) centers, to quinones in the respiratory chain. The immediate electron acceptor for the enzyme in this species is believed to be ubiquinone. Couples the redox reaction to proton translocation (for every two electrons transferred, four hydrogen ions are translocated across the cytoplasmic membrane), and thus conserves the redox energy in a proton gradient. This subunit may bind ubiquinone. This chain is NADH-quinone oxidoreductase subunit H, found in Campylobacter jejuni (strain RM1221).